Consider the following 291-residue polypeptide: MKTGRIVKSISGVYQVDVNGERFNTKPRGLFRKKKFSPVVGDIVEFEVQNINEGYIHQVFERENELKRPPVSNIDTLVIVMSAVEPNFSTQLLDRFLVIAHSYQLNARILVTKKDKTPIEKQFEINELLKIYENIGYETEFIGNDDDRKKIVEAWPAGLIVLSGQSGVGKSTFLNHYRPELNLETNDISKSLNRGKHTTRHVELFERQNGYIADTPGFSALDFDHIDKDEIKDYFLELNRYGETCKFRNCNHIKEPNCNVKHQLEIGNIAQFRYDHYLQLFNEISNRKVRY.

Residues 63-221 (ENELKRPPVS…IADTPGFSAL (159 aa)) form the CP-type G domain. Residues 112 to 115 (TKKD) and 164 to 172 (GQSGVGKST) contribute to the GTP site. The Zn(2+) site is built by Cys245, Cys250, His252, and Cys258.

The protein belongs to the TRAFAC class YlqF/YawG GTPase family. RsgA subfamily. As to quaternary structure, monomer. Associates with 30S ribosomal subunit, binds 16S rRNA. Zn(2+) is required as a cofactor.

The protein localises to the cytoplasm. Its function is as follows. One of several proteins that assist in the late maturation steps of the functional core of the 30S ribosomal subunit. Helps release RbfA from mature subunits. May play a role in the assembly of ribosomal proteins into the subunit. Circularly permuted GTPase that catalyzes slow GTP hydrolysis, GTPase activity is stimulated by the 30S ribosomal subunit. The chain is Small ribosomal subunit biogenesis GTPase RsgA from Staphylococcus aureus (strain COL).